The sequence spans 83 residues: Small ribosomal subunit protein bS16 (83 aa).

This sequence belongs to the bacterial ribosomal protein bS16 family.

The polypeptide is Small ribosomal subunit protein bS16 (Borrelia turicatae (strain 91E135)).